The chain runs to 489 residues: Adenosylhomocysteinase (489 aa).

The substrate site is built by threonine 68, aspartate 151, and glutamate 213. NAD(+) is bound at residue 214 to 216 (TTT). The substrate site is built by lysine 243 and aspartate 247. NAD(+)-binding positions include asparagine 248, 277–282 (GYGDVG), glutamate 300, asparagine 335, 356–358 (IGH), and asparagine 403.

This sequence belongs to the adenosylhomocysteinase family. Requires NAD(+) as cofactor.

The protein localises to the cytoplasm. It carries out the reaction S-adenosyl-L-homocysteine + H2O = L-homocysteine + adenosine. It functions in the pathway amino-acid biosynthesis; L-homocysteine biosynthesis; L-homocysteine from S-adenosyl-L-homocysteine: step 1/1. In terms of biological role, may play a key role in the regulation of the intracellular concentration of adenosylhomocysteine. This Mycobacterium sp. (strain JLS) protein is Adenosylhomocysteinase.